Reading from the N-terminus, the 1115-residue chain is Disheveled-associated activator of morphogenesis 2 (1115 aa).

Residues 40–416 form the GBD/FH3 domain; the sequence is GPIPNPEELN…QIVLQDERGV (377 aa). The stretch at 434–515 forms a coiled coil; that stretch reads MLINENEVKQ…ELVARHNESS (82 aa). 2 disordered regions span residues 510 to 605 and 655 to 697; these read RHNE…SHPL and QEGP…SATG. The FH1 domain maps to 518–694; sequence PVSSPPPPGG…TEKASRSMVS (177 aa). Residues 540-583 show a composition bias toward pro residues; it reads LPPPPPPLPFDSCPPPPAPPLPPGGPPIPPGAPPCFSSGPPPSH. The 448-residue stretch at 595–1042 folds into the FH2 domain; that stretch reads KKRIPQPSHP…DERRARMEFM (448 aa). Residues 1065–1095 enclose the DAD domain; sequence EESGEFDDLVSALRSGEVFDKDLSKFKRNRK.

Belongs to the formin homology family. Interacts with DVL3. Interacts with INF2. In early embryogenesis, expression is confined to embryonic ectoderm. Highly dynamic expression in later stages of gastrulation. In early somite stages, detected in posterior node and persists until 9-10 somites have developed when expression is concentrated in the chordoneural hinge. During organogenesis, expressed in the CNS, PNS, liver primordia, limb buds and genital tubercle.

In terms of biological role, key regulator of the Wnt signaling pathway, which is required for various processes during development, such as dorsal patterning, determination of left/right symmetry or myelination in the central nervous system. Acts downstream of Wnt ligands and upstream of beta-catenin (CTNNB1). Required for canonical Wnt signaling pathway during patterning in the dorsal spinal cord by promoting the aggregation of Disheveled (Dvl) complexes, thereby clustering and formation of Wnt receptor signalosomes and potentiating Wnt activity. During dorsal patterning of the spinal cord, inhibits oligodendrocytes differentiation via interaction with PIP5K1A. Also regulates non-canonical Wnt signaling pathway. Acts downstream of PITX2 in the developing gut and is required for left/right asymmetry within dorsal mesentery: affects mesenchymal condensation by lengthening cadherin-based junctions through WNT5A and non-canonical Wnt signaling, inducing polarized condensation in the left dorsal mesentery necessary to initiate gut rotation. Together with DAAM1, required for myocardial maturation and sarcomere assembly. Is a regulator of actin nucleation and elongation, filopodia formation and podocyte migration. In Mus musculus (Mouse), this protein is Disheveled-associated activator of morphogenesis 2.